Reading from the N-terminus, the 81-residue chain is ATP synthase subunit c (81 aa).

Transmembrane regions (helical) follow at residues 5 to 25 and 57 to 77; these read IAAG…IGAG and VGLV…FVFA.

It belongs to the ATPase C chain family. F-type ATPases have 2 components, F(1) - the catalytic core - and F(0) - the membrane proton channel. F(1) has five subunits: alpha(3), beta(3), gamma(1), delta(1), epsilon(1). F(0) has three main subunits: a(1), b(2) and c(10-14). The alpha and beta chains form an alternating ring which encloses part of the gamma chain. F(1) is attached to F(0) by a central stalk formed by the gamma and epsilon chains, while a peripheral stalk is formed by the delta and b chains.

It is found in the cell membrane. Functionally, f(1)F(0) ATP synthase produces ATP from ADP in the presence of a proton or sodium gradient. F-type ATPases consist of two structural domains, F(1) containing the extramembraneous catalytic core and F(0) containing the membrane proton channel, linked together by a central stalk and a peripheral stalk. During catalysis, ATP synthesis in the catalytic domain of F(1) is coupled via a rotary mechanism of the central stalk subunits to proton translocation. In terms of biological role, key component of the F(0) channel; it plays a direct role in translocation across the membrane. A homomeric c-ring of between 10-14 subunits forms the central stalk rotor element with the F(1) delta and epsilon subunits. The polypeptide is ATP synthase subunit c (Mycobacterium bovis (strain ATCC BAA-935 / AF2122/97)).